The sequence spans 190 residues: Putative acetyltransferase DDB_G0275913 (190 aa).

Belongs to the transferase hexapeptide repeat family.

This Dictyostelium discoideum (Social amoeba) protein is Putative acetyltransferase DDB_G0275913.